The sequence spans 196 residues: Probable malonic semialdehyde reductase RutE (196 aa).

It belongs to the nitroreductase family. HadB/RutE subfamily. The cofactor is FMN.

It carries out the reaction 3-hydroxypropanoate + NADP(+) = 3-oxopropanoate + NADPH + H(+). May reduce toxic product malonic semialdehyde to 3-hydroxypropionic acid, which is excreted. This chain is Probable malonic semialdehyde reductase RutE, found in Enterobacter sp. (strain 638).